Consider the following 1098-residue polypeptide: Eukaryotic translation initiation factor 3 subunit A (1098 aa).

Residues 324-503 (AQEQATRVLL…DCVRFGSSDA (180 aa)) form the PCI domain. A coiled-coil region spans residues 574 to 844 (TEIERIHRRK…ARQAVIDSQR (271 aa)). Disordered regions lie at residues 599-648 (EKAA…KIKR) and 805-1098 (RAEK…NWRR). Basic and acidic residues-rich tracts occupy residues 608 to 648 (QAKR…KIKR), 805 to 857 (RAEK…REME), and 877 to 895 (MPQR…EPFR). The span at 905–914 (DSSWRSSAQP) shows a compositional bias: polar residues. Basic and acidic residues-rich tracts occupy residues 916–978 (RKPD…ERGA) and 1054–1079 (LPPR…RDGP). Low complexity predominate over residues 1080–1098 (NRNSGANNAGNADSANWRR).

This sequence belongs to the eIF-3 subunit A family. Component of the eukaryotic translation initiation factor 3 (eIF-3) complex.

The protein resides in the cytoplasm. Its function is as follows. RNA-binding component of the eukaryotic translation initiation factor 3 (eIF-3) complex, which is involved in protein synthesis of a specialized repertoire of mRNAs and, together with other initiation factors, stimulates binding of mRNA and methionyl-tRNAi to the 40S ribosome. The eIF-3 complex specifically targets and initiates translation of a subset of mRNAs involved in cell proliferation. In Caenorhabditis briggsae, this protein is Eukaryotic translation initiation factor 3 subunit A.